Here is a 652-residue protein sequence, read N- to C-terminus: Drebrin (652 aa).

An N-acetylalanine modification is found at Ala-2. Residues 5-134 (GFAAHRLELL…DPGAIGQRLS (130 aa)) form the ADF-H domain. Composition is skewed to basic and acidic residues over residues 211 to 236 (MEQERLEQEERERRYREREEQIEEHR) and 288 to 298 (DNPREFFKQQE). Disordered regions lie at residues 211–350 (MEQE…YITC) and 371–652 (SAAG…GGGL). The segment covering 328–340 (SGPPSSSSSSSSP) has biased composition (low complexity). Over residues 507 to 517 (PDTPAGPPVPP) the composition is skewed to pro residues. Acidic residues-rich tracts occupy residues 540–554 (QHEEVEEEEEEEEAT) and 640–652 (PLPEEEESFGGGL).

Brain neurons.

It localises to the cytoplasm. The protein resides in the cell projection. It is found in the dendrite. The protein localises to the cell cortex. Its subcellular location is the cell junction. It localises to the growth cone. Functionally, actin cytoskeleton-organizing protein that plays a role in the formation of cell projections. Plays a role in dendritic spine morphogenesis and organization, including the localization of the dopamine receptor DRD1 to the dendritic spines. Involved in synaptic plasticity. This Gallus gallus (Chicken) protein is Drebrin (DBN1).